Here is a 212-residue protein sequence, read N- to C-terminus: U8 snoRNA-decapping enzyme (212 aa).

The disordered stretch occupies residues 1-23 (MAESRSPDRGAKEDKPRPRNISR). Residues His37, Arg63, and Phe70 each coordinate substrate. A Nudix hydrolase domain is found at 39–187 (LLHAPSQAKL…IGNSKSQLLY (149 aa)). Mn(2+) is bound by residues Gly72, Glu89, Glu93, and Glu150. The Nudix box signature appears at 74-95 (FVDTRDISLEEGLKRELEEELG). Substrate contacts are provided by Asn180 and Gln184.

It belongs to the Nudix hydrolase family. NUDT16 subfamily. As to quaternary structure, homodimer. Mg(2+) is required as a cofactor. Mn(2+) serves as cofactor. The cofactor is Co(2+). As to expression, detected in ovary, and at very low levels in epithelial cells (at protein level).

Its subcellular location is the nucleus. The protein resides in the nucleolus. It is found in the nucleoplasm. It localises to the cytoplasm. The catalysed reaction is a 5'-end (N(7)-methyl 5'-triphosphoguanosine)-ribonucleoside in mRNA + H2O = N(7)-methyl-GDP + a 5'-end phospho-ribonucleoside in mRNA + 2 H(+). The enzyme catalyses IDP + H2O = IMP + phosphate + H(+). It carries out the reaction dIDP + H2O = dIMP + phosphate + H(+). It catalyses the reaction a 5'-end NAD(+)-phospho-ribonucleoside in mRNA + H2O = a 5'-end phospho-ribonucleoside in mRNA + NAD(+) + H(+). The catalysed reaction is a 5'-end FAD-phospho-ribonucleoside in mRNA + H2O = a 5'-end phospho-adenosine-phospho-ribonucleoside in mRNA + FMN + 2 H(+). The enzyme catalyses a 5'-end CoA-ribonucleoside in mRNA + H2O = a 5'-end phospho-adenosine-phospho-ribonucleoside in mRNA + (R)-4'-phosphopantetheine + 2 H(+). Functionally, RNA-binding and decapping enzyme that catalyzes the cleavage of the cap structure of snoRNAs and mRNAs in a metal-dependent manner. Part of the U8 snoRNP complex that is required for the accumulation of mature 5.8S and 28S rRNA. Has diphosphatase activity and removes m7G and/or m227G caps from U8 snoRNA and leaves a 5'monophosphate on the RNA. Also catalyzes the cleavage of the cap structure on mRNAs. Does not hydrolyze cap analog structures like 7-methylguanosine nucleoside triphosphate (m7GpppG). Also hydrolysis m7G- and m227G U3-capped RNAs but with less efficiencies. Has broad substrate specificity with manganese or cobalt as cofactor and can act on various RNA species. Binds to the U8 snoRNA; metal is not required for RNA-binding. May play a role in the regulation of snoRNAs and mRNAs degradation. Also acts as a phosphatase; hydrolyzes the non-canonical purine nucleotides inosine diphosphate (IDP) and deoxyinosine diphosphate (dITP) as well as guanosine diphosphate (GDP), deoxyguanosine diphosphate (dGDP), xanthine diphosphate (XDP), inosine triphosphate (ITP) and deoxyinosine triphosphate (ITP) to their respective monophosphate derivatives and does not distinguish between the deoxy- and ribose forms. The order of activity with different substrates is IDP &gt; dIDP &gt;&gt; GDP = dGDP &gt; XDP = ITP = dITP. Binds strongly to GTP, ITP and XTP. Participates in the hydrolysis of dIDP/IDP and probably excludes non-canonical purines from RNA and DNA precursor pools, thus preventing their incorporation into RNA and DNA and avoiding chromosomal lesions. Exhibits decapping activity towards NAD-capped RNAs and FAD-capped RNAs. Exhibits decapping activity towards dpCoA-capped RNAs in vitro. This chain is U8 snoRNA-decapping enzyme (nudt16), found in Xenopus laevis (African clawed frog).